The chain runs to 327 residues: Probable cell division protein WhiA (327 aa).

Residues 275–308 (SLEELGRLADPVMTKDAVAGRIRRLLSMADRKAK) constitute a DNA-binding region (H-T-H motif). The disordered stretch occupies residues 307–327 (AKTEGIPDTESAVTPELLEEA).

This sequence belongs to the WhiA family.

Its function is as follows. Involved in cell division and chromosome segregation. This is Probable cell division protein WhiA from Mycobacteroides abscessus (strain ATCC 19977 / DSM 44196 / CCUG 20993 / CIP 104536 / JCM 13569 / NCTC 13031 / TMC 1543 / L948) (Mycobacterium abscessus).